The primary structure comprises 614 residues: tRNA uridine 5-carboxymethylaminomethyl modification enzyme MnmG (614 aa).

10–15 (GAGHAG) lines the FAD pocket. Position 271–285 (271–285 (GPRYCPSIEDKIVKF)) interacts with NAD(+).

Belongs to the MnmG family. As to quaternary structure, homodimer. Heterotetramer of two MnmE and two MnmG subunits. Requires FAD as cofactor.

Its subcellular location is the cytoplasm. Functionally, NAD-binding protein involved in the addition of a carboxymethylaminomethyl (cmnm) group at the wobble position (U34) of certain tRNAs, forming tRNA-cmnm(5)s(2)U34. This Ureaplasma parvum serovar 3 (strain ATCC 27815 / 27 / NCTC 11736) protein is tRNA uridine 5-carboxymethylaminomethyl modification enzyme MnmG.